A 231-amino-acid chain; its full sequence is 2-C-methyl-D-erythritol 4-phosphate cytidylyltransferase (231 aa).

Belongs to the IspD/TarI cytidylyltransferase family. IspD subfamily.

The catalysed reaction is 2-C-methyl-D-erythritol 4-phosphate + CTP + H(+) = 4-CDP-2-C-methyl-D-erythritol + diphosphate. Its pathway is isoprenoid biosynthesis; isopentenyl diphosphate biosynthesis via DXP pathway; isopentenyl diphosphate from 1-deoxy-D-xylulose 5-phosphate: step 2/6. Functionally, catalyzes the formation of 4-diphosphocytidyl-2-C-methyl-D-erythritol from CTP and 2-C-methyl-D-erythritol 4-phosphate (MEP). The chain is 2-C-methyl-D-erythritol 4-phosphate cytidylyltransferase from Clostridium kluyveri (strain NBRC 12016).